A 417-amino-acid polypeptide reads, in one-letter code: Serine hydroxymethyltransferase (417 aa).

(6S)-5,6,7,8-tetrahydrofolate contacts are provided by residues leucine 120 and 124–126 (GHL). The residue at position 229 (lysine 229) is an N6-(pyridoxal phosphate)lysine.

Belongs to the SHMT family. In terms of assembly, homodimer. Pyridoxal 5'-phosphate is required as a cofactor.

It is found in the cytoplasm. The catalysed reaction is (6R)-5,10-methylene-5,6,7,8-tetrahydrofolate + glycine + H2O = (6S)-5,6,7,8-tetrahydrofolate + L-serine. It participates in one-carbon metabolism; tetrahydrofolate interconversion. Its pathway is amino-acid biosynthesis; glycine biosynthesis; glycine from L-serine: step 1/1. Catalyzes the reversible interconversion of serine and glycine with tetrahydrofolate (THF) serving as the one-carbon carrier. This reaction serves as the major source of one-carbon groups required for the biosynthesis of purines, thymidylate, methionine, and other important biomolecules. Also exhibits THF-independent aldolase activity toward beta-hydroxyamino acids, producing glycine and aldehydes, via a retro-aldol mechanism. The chain is Serine hydroxymethyltransferase from Anaeromyxobacter sp. (strain K).